The sequence spans 745 residues: NAD(P)H-quinone oxidoreductase subunit 5, chloroplastic (745 aa).

The next 16 membrane-spanning stretches (helical) occupy residues W9–F29, W50–I70, I99–I119, F135–I155, I157–T177, I194–E214, N229–A249, T268–A288, L290–I310, L337–I357, A364–S384, I406–S426, W435–Y455, L550–F570, F610–Y630, and F724–L744.

It belongs to the complex I subunit 5 family. In terms of assembly, NDH is composed of at least 16 different subunits, 5 of which are encoded in the nucleus.

It localises to the plastid. It is found in the chloroplast thylakoid membrane. The catalysed reaction is a plastoquinone + NADH + (n+1) H(+)(in) = a plastoquinol + NAD(+) + n H(+)(out). It carries out the reaction a plastoquinone + NADPH + (n+1) H(+)(in) = a plastoquinol + NADP(+) + n H(+)(out). Functionally, NDH shuttles electrons from NAD(P)H:plastoquinone, via FMN and iron-sulfur (Fe-S) centers, to quinones in the photosynthetic chain and possibly in a chloroplast respiratory chain. The immediate electron acceptor for the enzyme in this species is believed to be plastoquinone. Couples the redox reaction to proton translocation, and thus conserves the redox energy in a proton gradient. In Gossypium barbadense (Sea Island cotton), this protein is NAD(P)H-quinone oxidoreductase subunit 5, chloroplastic (ndhF).